The following is a 354-amino-acid chain: Selenide, water dikinase (354 aa).

Cysteine 23 is a catalytic residue. ATP-binding positions include lysine 26 and 54–56; that span reads TSD. Aspartate 57 serves as a coordination point for Mg(2+). ATP contacts are provided by residues aspartate 74, aspartate 97, and 145-147; that span reads GHS. A Mg(2+)-binding site is contributed by aspartate 97. Residue aspartate 233 participates in Mg(2+) binding.

This sequence belongs to the selenophosphate synthase 1 family. Class I subfamily. In terms of assembly, homodimer. Mg(2+) is required as a cofactor.

It carries out the reaction hydrogenselenide + ATP + H2O = selenophosphate + AMP + phosphate + 2 H(+). In terms of biological role, synthesizes selenophosphate from selenide and ATP. In Burkholderia ambifaria (strain MC40-6), this protein is Selenide, water dikinase.